The chain runs to 254 residues: Thiazole synthase (254 aa).

Catalysis depends on lysine 96, which acts as the Schiff-base intermediate with DXP. 1-deoxy-D-xylulose 5-phosphate contacts are provided by residues glycine 157, 183–184, and 205–206; these read AG and NT.

The protein belongs to the ThiG family. Homotetramer. Forms heterodimers with either ThiH or ThiS.

It localises to the cytoplasm. It carries out the reaction [ThiS sulfur-carrier protein]-C-terminal-Gly-aminoethanethioate + 2-iminoacetate + 1-deoxy-D-xylulose 5-phosphate = [ThiS sulfur-carrier protein]-C-terminal Gly-Gly + 2-[(2R,5Z)-2-carboxy-4-methylthiazol-5(2H)-ylidene]ethyl phosphate + 2 H2O + H(+). The protein operates within cofactor biosynthesis; thiamine diphosphate biosynthesis. Functionally, catalyzes the rearrangement of 1-deoxy-D-xylulose 5-phosphate (DXP) to produce the thiazole phosphate moiety of thiamine. Sulfur is provided by the thiocarboxylate moiety of the carrier protein ThiS. In vitro, sulfur can be provided by H(2)S. This is Thiazole synthase from Clostridium kluyveri (strain ATCC 8527 / DSM 555 / NBRC 12016 / NCIMB 10680 / K1).